A 145-amino-acid polypeptide reads, in one-letter code: Transcriptional regulator MraZ (145 aa).

2 consecutive SpoVT-AbrB domains span residues 7-54 (NATN…GPDL) and 83-126 (GVFM…QPQA).

This sequence belongs to the MraZ family. In terms of assembly, forms oligomers.

Its subcellular location is the cytoplasm. It is found in the nucleoid. The polypeptide is Transcriptional regulator MraZ (Rhizobium johnstonii (strain DSM 114642 / LMG 32736 / 3841) (Rhizobium leguminosarum bv. viciae)).